We begin with the raw amino-acid sequence, 54 residues long: Movement protein p6 (54 aa).

Residues 1-10 (MDCVLRSYLL) are Lumenal-facing. Residues 11-31 (LAFGFLICLFLFCLVVFIWFV) traverse the membrane as a helical segment. The Cytoplasmic portion of the chain corresponds to 32–54 (YKQILFRTTAQSNEARHNHSTVV).

In terms of assembly, homodimer; disulfide-linked.

The protein localises to the host rough endoplasmic reticulum membrane. Functionally, transports viral genome to neighboring plant cells directly through plasmosdesmata, without any budding. The movement protein allows efficient cell to cell propagation, by bypassing the host cell wall barrier. Two movement proteins, p6, Hsp70h and three structural proteins, CP, CPm, and P64 are essential for cell-cell movement. Also plays a role in virion formation. Together with CPm and p64, encapsidates the 5'-terminal portion of the viral genome. The sequence is that of Movement protein p6 from Beet yellows virus (isolate Ukraine) (BYV).